Here is a 330-residue protein sequence, read N- to C-terminus: Fructose-1,6-bisphosphatase class 1 (330 aa).

The Mg(2+) site is built by Glu84, Asp103, Leu105, and Asp106. Residues 106–109 (DGSS), Asn196, and Lys262 each bind substrate. Glu268 serves as a coordination point for Mg(2+).

Belongs to the FBPase class 1 family. In terms of assembly, homotetramer. Requires Mg(2+) as cofactor.

The protein localises to the cytoplasm. The enzyme catalyses beta-D-fructose 1,6-bisphosphate + H2O = beta-D-fructose 6-phosphate + phosphate. It participates in carbohydrate biosynthesis; gluconeogenesis. The sequence is that of Fructose-1,6-bisphosphatase class 1 from Shewanella sp. (strain MR-7).